A 148-amino-acid polypeptide reads, in one-letter code: F-box protein At3g55900 (148 aa).

The F-box domain maps to 9 to 59 (CRNLSELPQELLYKILGLLPTRNVVSTSLISHQRRSQFHWMERLKFRYPRL).

This is F-box protein At3g55900 from Arabidopsis thaliana (Mouse-ear cress).